The following is a 433-amino-acid chain: Serine hydroxymethyltransferase (433 aa).

Residues Leu132 and 136-138 (GHL) each bind (6S)-5,6,7,8-tetrahydrofolate. The residue at position 241 (Lys241) is an N6-(pyridoxal phosphate)lysine.

This sequence belongs to the SHMT family. In terms of assembly, homodimer. It depends on pyridoxal 5'-phosphate as a cofactor.

Its subcellular location is the cytoplasm. The enzyme catalyses (6R)-5,10-methylene-5,6,7,8-tetrahydrofolate + glycine + H2O = (6S)-5,6,7,8-tetrahydrofolate + L-serine. The protein operates within one-carbon metabolism; tetrahydrofolate interconversion. It functions in the pathway amino-acid biosynthesis; glycine biosynthesis; glycine from L-serine: step 1/1. Its function is as follows. Catalyzes the reversible interconversion of serine and glycine with tetrahydrofolate (THF) serving as the one-carbon carrier. This reaction serves as the major source of one-carbon groups required for the biosynthesis of purines, thymidylate, methionine, and other important biomolecules. Also exhibits THF-independent aldolase activity toward beta-hydroxyamino acids, producing glycine and aldehydes, via a retro-aldol mechanism. This is Serine hydroxymethyltransferase from Rhodopseudomonas palustris (strain BisA53).